Reading from the N-terminus, the 251-residue chain is MSDLLEIRDVHKSFGAVKALDGVSMEINKGEVVALLGDNGAGKSTLIKIISGYHKPDRGDLVFEGKKVIFNSPNDARSLGIETIYQDLALIPDLPIYYNIFLAREVTNKIFLNKKKMMEESKKLLDSLQIRIPDINMKVENLSGGQRQAVAVARAVYFSAKMILMDEPTAALSVVEARKVLELARNLKKKGLGVLIITHNIIQGYEVADRIYVLDRGKIIFHKKKEETNVEEITEVMTSFALGKVNLGEKR.

The ABC transporter domain maps to 5–241; that stretch reads LEIRDVHKSF…EITEVMTSFA (237 aa). 37–44 serves as a coordination point for ATP; that stretch reads GDNGAGKS.

It belongs to the ABC transporter superfamily. In terms of assembly, the complex is composed of two ATP-binding proteins (XylG), two transmembrane proteins (XylH) and a solute-binding protein (XylF).

The protein resides in the cell membrane. The catalysed reaction is D-xylose(out) + ATP + H2O = D-xylose(in) + ADP + phosphate + H(+). It catalyses the reaction L-arabinose(out) + ATP + H2O = L-arabinose(in) + ADP + phosphate + H(+). Its function is as follows. Part of the ABC transporter complex XylFGH involved in the uptake of xylose and arabinose. Responsible for energy coupling to the transport system. The protein is Xylose/arabinose import ATP-binding protein XylG of Sulfolobus acidocaldarius (strain ATCC 33909 / DSM 639 / JCM 8929 / NBRC 15157 / NCIMB 11770).